Here is a 176-residue protein sequence, read N- to C-terminus: NAD(P)H-quinone oxidoreductase subunit 6, chloroplastic (176 aa).

The next 5 membrane-spanning stretches (helical) occupy residues 10–30 (FLLVFLELGLILGSLGVVFLP), 33–53 (IYSAFSLGLVLFCISLFYILL), 61–81 (AQLLIYVGAINVLIIFAVMFM), 92–112 (LWTVGDGVTSMVCTSLFISLI), and 153–173 (FLPFELISIILLVALIGAIAI).

Belongs to the complex I subunit 6 family. In terms of assembly, NDH is composed of at least 16 different subunits, 5 of which are encoded in the nucleus.

It localises to the plastid. It is found in the chloroplast thylakoid membrane. The enzyme catalyses a plastoquinone + NADH + (n+1) H(+)(in) = a plastoquinol + NAD(+) + n H(+)(out). It catalyses the reaction a plastoquinone + NADPH + (n+1) H(+)(in) = a plastoquinol + NADP(+) + n H(+)(out). Functionally, NDH shuttles electrons from NAD(P)H:plastoquinone, via FMN and iron-sulfur (Fe-S) centers, to quinones in the photosynthetic chain and possibly in a chloroplast respiratory chain. The immediate electron acceptor for the enzyme in this species is believed to be plastoquinone. Couples the redox reaction to proton translocation, and thus conserves the redox energy in a proton gradient. The sequence is that of NAD(P)H-quinone oxidoreductase subunit 6, chloroplastic (ndhG) from Jasminum nudiflorum (Winter jasmine).